We begin with the raw amino-acid sequence, 363 residues long: Phosphoserine aminotransferase (363 aa).

Arg42 is an L-glutamate binding site. Residues 76 to 77, Trp101, Thr151, Asp170, and Gln193 each bind pyridoxal 5'-phosphate; that span reads AS. An N6-(pyridoxal phosphate)lysine modification is found at Lys194. Pyridoxal 5'-phosphate is bound at residue 234–235; the sequence is NT.

It belongs to the class-V pyridoxal-phosphate-dependent aminotransferase family. SerC subfamily. Homodimer. The cofactor is pyridoxal 5'-phosphate.

The protein localises to the cytoplasm. It catalyses the reaction O-phospho-L-serine + 2-oxoglutarate = 3-phosphooxypyruvate + L-glutamate. It carries out the reaction 4-(phosphooxy)-L-threonine + 2-oxoglutarate = (R)-3-hydroxy-2-oxo-4-phosphooxybutanoate + L-glutamate. It functions in the pathway amino-acid biosynthesis; L-serine biosynthesis; L-serine from 3-phospho-D-glycerate: step 2/3. Its function is as follows. Catalyzes the reversible conversion of 3-phosphohydroxypyruvate to phosphoserine and of 3-hydroxy-2-oxo-4-phosphonooxybutanoate to phosphohydroxythreonine. In Listeria monocytogenes serovar 1/2a (strain ATCC BAA-679 / EGD-e), this protein is Phosphoserine aminotransferase.